A 427-amino-acid polypeptide reads, in one-letter code: Histidinol dehydrogenase (427 aa).

NAD(+)-binding residues include Y123, Q185, and N208. Residues S231, Q253, and H256 each contribute to the substrate site. The Zn(2+) site is built by Q253 and H256. Residues E321 and H322 each act as proton acceptor in the active site. Residues H322, D355, E409, and H414 each coordinate substrate. Residue D355 coordinates Zn(2+). H414 contributes to the Zn(2+) binding site.

The protein belongs to the histidinol dehydrogenase family. Requires Zn(2+) as cofactor.

The enzyme catalyses L-histidinol + 2 NAD(+) + H2O = L-histidine + 2 NADH + 3 H(+). Its pathway is amino-acid biosynthesis; L-histidine biosynthesis; L-histidine from 5-phospho-alpha-D-ribose 1-diphosphate: step 9/9. Catalyzes the sequential NAD-dependent oxidations of L-histidinol to L-histidinaldehyde and then to L-histidine. This Oceanobacillus iheyensis (strain DSM 14371 / CIP 107618 / JCM 11309 / KCTC 3954 / HTE831) protein is Histidinol dehydrogenase.